We begin with the raw amino-acid sequence, 454 residues long: Glutamyl-tRNA reductase (454 aa).

Substrate is bound by residues T49 to R52, S109, E114 to Q116, and Q120. The Nucleophile role is filled by C50. G189–G194 contributes to the NADP(+) binding site.

Belongs to the glutamyl-tRNA reductase family. As to quaternary structure, homodimer.

It carries out the reaction (S)-4-amino-5-oxopentanoate + tRNA(Glu) + NADP(+) = L-glutamyl-tRNA(Glu) + NADPH + H(+). It functions in the pathway porphyrin-containing compound metabolism; protoporphyrin-IX biosynthesis; 5-aminolevulinate from L-glutamyl-tRNA(Glu): step 1/2. In terms of biological role, catalyzes the NADPH-dependent reduction of glutamyl-tRNA(Glu) to glutamate 1-semialdehyde (GSA). The chain is Glutamyl-tRNA reductase from Geobacillus kaustophilus (strain HTA426).